Reading from the N-terminus, the 425-residue chain is (S)-6-hydroxynicotine oxidase (425 aa).

Residues Ser12, Glu31, 38 to 39, and 56 to 59 contribute to the FAD site; these read GR and GGAY. A (S)-6-hydroxynicotine-binding site is contributed by Asn166. Val226 lines the FAD pocket. Residues Tyr311, Phe326, and Trp371 each contribute to the (S)-6-hydroxynicotine site. FAD-binding positions include Ser398 and 406–408; that span reads GYI. Residue Tyr407 coordinates (S)-6-hydroxynicotine.

The protein belongs to the flavin monoamine oxidase family. As to quaternary structure, homodimer. FAD serves as cofactor.

Its subcellular location is the cytoplasm. It catalyses the reaction (S)-6-hydroxynicotine + O2 + H2O = 6-hydroxypseudooxynicotine + H2O2. The enzyme catalyses (S)-6-hydroxynicotine + O2 = 6-hydroxy-N-methylmyosmine + H2O2. It participates in alkaloid degradation; nicotine degradation; 6-hydroxypseudooxynicotine from nicotine (S-isomer route): step 2/2. With respect to regulation, inhibited by (R)-6-hydroxynicotine. Inhibited by high concentrations of phenanthroline. Activity is strongly affected by Hg(2+) and p-chloromercuriphenylsulfonate, but not by N-ethylmaleimide and 5,5'-dithiobis-(2-nitrobenzoate). In terms of biological role, involved in the degradation of L-nicotine. Catalyzes the oxidation of (S)-6-hydroxynicotine (6-hydroxy-L-nicotine) to 6-hydroxypseudooxynicotine. Oxidation of the pyrrolidine ring of (S)-6-hydroxynicotine leads to the formation of the optically inactive 6-hydroxy-N-methylmyosmine, which hydrolyzes spontaneously to 6-hydroxypseudooxynicotine. Acts with absolute stereospecificity on the L-form of 6-hydroxynicotine. Can also use (S)-6-hydroxynornicotine. This chain is (S)-6-hydroxynicotine oxidase, found in Paenarthrobacter nicotinovorans (Arthrobacter nicotinovorans).